The primary structure comprises 296 residues: Ribosomal RNA small subunit methyltransferase A (296 aa).

Asparagine 31, leucine 33, glycine 58, glutamate 79, aspartate 111, and asparagine 136 together coordinate S-adenosyl-L-methionine.

The protein belongs to the class I-like SAM-binding methyltransferase superfamily. rRNA adenine N(6)-methyltransferase family. RsmA subfamily.

It is found in the cytoplasm. The catalysed reaction is adenosine(1518)/adenosine(1519) in 16S rRNA + 4 S-adenosyl-L-methionine = N(6)-dimethyladenosine(1518)/N(6)-dimethyladenosine(1519) in 16S rRNA + 4 S-adenosyl-L-homocysteine + 4 H(+). Functionally, specifically dimethylates two adjacent adenosines (A1518 and A1519) in the loop of a conserved hairpin near the 3'-end of 16S rRNA in the 30S particle. May play a critical role in biogenesis of 30S subunits. This Lactobacillus delbrueckii subsp. bulgaricus (strain ATCC BAA-365 / Lb-18) protein is Ribosomal RNA small subunit methyltransferase A.